We begin with the raw amino-acid sequence, 345 residues long: MMVTVSYDYDYNSTFLPDGFVDNYVERLSFGDLVAVVIMVVVFLVGVPGNALVVWVTACEARRHINAIWFLNLAAADLLSCLALPILLVSTVHLNHWYFGDTACKVLPSLILLNMYTSILLLATISADRLLLVLSPIWCQRFRGGCLAWTACGLAWVLALLLSSPSFLYRRTHNEHFSFKVYCVTDYGRDISKERAVALVRLLVGFIVPLITLTACYTFLLLRTWSRKATRSAKTVKVVVAVVSSFFVFWLPYQVTGILLAWHSPNSATYRNTKALDAVCVAFAYINCCINPIIYVVAGHGFQGRLLKSLPSVLRNVLTEESLDKRHQSFARSTVDTMPQKSESV.

Residues 1-32 lie on the Extracellular side of the membrane; sequence MMVTVSYDYDYNSTFLPDGFVDNYVERLSFGD. A sulfotyrosine mark is found at Tyr-9 and Tyr-11. Asn-12 carries N-linked (GlcNAc...) asparagine glycosylation. Residues 33–59 traverse the membrane as a helical segment; the sequence is LVAVVIMVVVFLVGVPGNALVVWVTAC. Topologically, residues 60-64 are cytoplasmic; sequence EARRH. The helical transmembrane segment at 65–88 threads the bilayer; that stretch reads INAIWFLNLAAADLLSCLALPILL. Residues 89-105 lie on the Extracellular side of the membrane; that stretch reads VSTVHLNHWYFGDTACK. Cys-104 and Cys-183 are joined by a disulfide. A helical transmembrane segment spans residues 106-127; it reads VLPSLILLNMYTSILLLATISA. The Cytoplasmic segment spans residues 128–148; that stretch reads DRLLLVLSPIWCQRFRGGCLA. The chain crosses the membrane as a helical span at residues 149–169; it reads WTACGLAWVLALLLSSPSFLY. Residues 170 to 195 lie on the Extracellular side of the membrane; sequence RRTHNEHFSFKVYCVTDYGRDISKER. The chain crosses the membrane as a helical span at residues 196-221; it reads AVALVRLLVGFIVPLITLTACYTFLL. Residues 222–237 lie on the Cytoplasmic side of the membrane; that stretch reads LRTWSRKATRSAKTVK. A helical membrane pass occupies residues 238-260; that stretch reads VVVAVVSSFFVFWLPYQVTGILL. Residues 261–277 lie on the Extracellular side of the membrane; that stretch reads AWHSPNSATYRNTKALD. The helical transmembrane segment at 278–298 threads the bilayer; sequence AVCVAFAYINCCINPIIYVVA. At 299–345 the chain is on the cytoplasmic side; sequence GHGFQGRLLKSLPSVLRNVLTEESLDKRHQSFARSTVDTMPQKSESV. Residues Ser-309, Ser-312, Ser-322, Ser-329, and Ser-333 each carry the phosphoserine modification.

It belongs to the G-protein coupled receptor 1 family. Homodimer. May also form higher-order oligomers. Interacts (when phosphorylated) with ARRB1 and ARRB2; the interaction is associated with internalization of C5aR. Post-translationally, sulfation plays a critical role in the association of C5aR with C5a, but no significant role in the ability of the receptor to transduce a signal and mobilize calcium in response to a small peptide agonist. Phosphorylated on serine residues in response to C5a binding, resulting in internalization of the receptor and short-term desensitization to C5a. In terms of tissue distribution, expressed strongly in macrophages and spleen. Weak expression detected in lung, liver, brain, heart and kidney.

It localises to the cell membrane. The protein localises to the cytoplasmic vesicle. In terms of biological role, receptor for the chemotactic and inflammatory peptide anaphylatoxin C5a. The ligand interacts with at least two sites on the receptor: a high-affinity site on the extracellular N-terminus, and a second site in the transmembrane region which activates downstream signaling events. Receptor activation stimulates chemotaxis, granule enzyme release, intracellular calcium release and superoxide anion production. The sequence is that of C5a anaphylatoxin chemotactic receptor 1 (C5AR1) from Cavia porcellus (Guinea pig).